Here is a 31-residue protein sequence, read N- to C-terminus: Spectrin beta chain, non-erythrocytic 1 (31 aa).

3 Spectrin repeats span residues 1 to 10 (VLLLSQDYGK), 11 to 19 (YKEVAELTR), and 20 to 31 (TQILAASYELHK). Tyr-27 carries the phosphotyrosine modification.

This sequence belongs to the spectrin family. As to quaternary structure, interacts with ANK2. Interacts with CPNE4 (via VWFA domain). Like erythrocyte spectrin, the spectrin-like proteins are capable to form dimers which can further associate to tetramers. Associates with the gamma-tubulin complex in brain, but not in kidney, liver, sperm, or uterus. Interacts with CAMSAP1. Can form heterodimers with SPTAN1.

The protein localises to the cytoplasm. It is found in the cytoskeleton. Its subcellular location is the myofibril. It localises to the sarcomere. The protein resides in the m line. The protein localises to the cytosol. It is found in the cell membrane. Fodrin, which seems to be involved in secretion, interacts with calmodulin in a calcium-dependent manner and is thus candidate for the calcium-dependent movement of the cytoskeleton at the membrane. Plays a critical role in central nervous system development and function. The sequence is that of Spectrin beta chain, non-erythrocytic 1 (SPTBN1) from Capra hircus (Goat).